The sequence spans 426 residues: Phosphomethylpyrimidine synthase (426 aa).

Substrate-binding positions include N65, M94, Y123, H162, 184 to 186, 225 to 228, and E264; these read SRG and DGMR. H268 contacts Zn(2+). Y291 contributes to the substrate binding site. H332 provides a ligand contact to Zn(2+). Residues C408, C411, and C415 each contribute to the [4Fe-4S] cluster site.

This sequence belongs to the ThiC family. It depends on [4Fe-4S] cluster as a cofactor.

The enzyme catalyses 5-amino-1-(5-phospho-beta-D-ribosyl)imidazole + S-adenosyl-L-methionine = 4-amino-2-methyl-5-(phosphooxymethyl)pyrimidine + CO + 5'-deoxyadenosine + formate + L-methionine + 3 H(+). It functions in the pathway cofactor biosynthesis; thiamine diphosphate biosynthesis. Its function is as follows. Catalyzes the synthesis of the hydroxymethylpyrimidine phosphate (HMP-P) moiety of thiamine from aminoimidazole ribotide (AIR) in a radical S-adenosyl-L-methionine (SAM)-dependent reaction. This Methanocaldococcus jannaschii (strain ATCC 43067 / DSM 2661 / JAL-1 / JCM 10045 / NBRC 100440) (Methanococcus jannaschii) protein is Phosphomethylpyrimidine synthase.